The following is a 267-amino-acid chain: Diphthine synthase (267 aa).

Residues Leu-9, Asp-87, Ile-90, 115–116 (SI), Leu-166, Leu-205, and His-230 contribute to the S-adenosyl-L-methionine site.

The protein belongs to the diphthine synthase family. Homodimer.

It carries out the reaction 2-[(3S)-amino-3-carboxypropyl]-L-histidyl-[translation elongation factor 2] + 3 S-adenosyl-L-methionine = diphthine-[translation elongation factor 2] + 3 S-adenosyl-L-homocysteine + 3 H(+). The protein operates within protein modification; peptidyl-diphthamide biosynthesis. Its function is as follows. S-adenosyl-L-methionine-dependent methyltransferase that catalyzes the trimethylation of the amino group of the modified target histidine residue in translation elongation factor 2 (EF-2), to form an intermediate called diphthine. The three successive methylation reactions represent the second step of diphthamide biosynthesis. This chain is Diphthine synthase, found in Staphylothermus marinus (strain ATCC 43588 / DSM 3639 / JCM 9404 / F1).